The primary structure comprises 401 residues: Probable N-acetyl-gamma-glutamyl-phosphate reductase, chloroplastic (401 aa).

The transit peptide at 1–48 (MSTASAFSSIQGCWFKGERKIRVADKRAKRLTLGSHVASPSSMSFRVS) directs the protein to the chloroplast. The active site involves Cys-205.

The protein belongs to the NAGSA dehydrogenase family. Type 1 subfamily. As to quaternary structure, homotetramer.

Its subcellular location is the plastid. It is found in the chloroplast. The catalysed reaction is N-acetyl-L-glutamate 5-semialdehyde + phosphate + NADP(+) = N-acetyl-L-glutamyl 5-phosphate + NADPH + H(+). The protein operates within amino-acid biosynthesis; L-arginine biosynthesis; N(2)-acetyl-L-ornithine from L-glutamate: step 3/4. In Arabidopsis thaliana (Mouse-ear cress), this protein is Probable N-acetyl-gamma-glutamyl-phosphate reductase, chloroplastic.